Consider the following 356-residue polypeptide: tRNA N6-adenosine threonylcarbamoyltransferase (356 aa).

Residues His-122, His-126, and Tyr-143 each contribute to the a divalent metal cation site. Substrate is bound by residues 143–147 (YVSGG), Asp-175, Gly-190, Glu-194, and Asn-287. Asp-315 provides a ligand contact to a divalent metal cation.

The protein belongs to the KAE1 / TsaD family. As to quaternary structure, component of the EKC/KEOPS complex composed of at least BUD32, CGI121, GON7, KAE1 and PCC1; the whole complex dimerizes. A divalent metal cation serves as cofactor.

The protein localises to the cytoplasm. The protein resides in the nucleus. It carries out the reaction L-threonylcarbamoyladenylate + adenosine(37) in tRNA = N(6)-L-threonylcarbamoyladenosine(37) in tRNA + AMP + H(+). Its function is as follows. Component of the EKC/KEOPS complex that is required for the formation of a threonylcarbamoyl group on adenosine at position 37 (t(6)A37) in tRNAs that read codons beginning with adenine. The complex is probably involved in the transfer of the threonylcarbamoyl moiety of threonylcarbamoyl-AMP (TC-AMP) to the N6 group of A37. KAE1 likely plays a direct catalytic role in this reaction, but requires other protein(s) of the complex to fulfill this activity. The EKC/KEOPS complex also promotes both telomere uncapping and telomere elongation. The complex is required for efficient recruitment of transcriptional coactivators. This Chaetomium globosum (strain ATCC 6205 / CBS 148.51 / DSM 1962 / NBRC 6347 / NRRL 1970) (Soil fungus) protein is tRNA N6-adenosine threonylcarbamoyltransferase.